The sequence spans 177 residues: Neuroblastoma suppressor of tumorigenicity 1 (177 aa).

The signal sequence occupies residues 1-16 (MLWFVVGALFPALLLA). Intrachain disulfides connect Cys-34–Cys-84, Cys-48–Cys-98, Cys-58–Cys-117, Cys-62–Cys-119, and Cys-81–Cys-122. A CTCK domain is found at 34–123 (CEAKNITQIV…ILHCSCQACG (90 aa)). Residues 143–177 (MPAEGPGPHHYAHHQQEVEEPPASSHHHHEEEGDE) are disordered.

This sequence belongs to the DAN family.

Its subcellular location is the secreted. In terms of biological role, may act as a tumor suppressor. This Gallus gallus (Chicken) protein is Neuroblastoma suppressor of tumorigenicity 1 (NBL1).